Here is a 279-residue protein sequence, read N- to C-terminus: Movement protein (279 aa).

Over residues 256-266 (PPIAIGSPSAS) the composition is skewed to low complexity. Positions 256–279 (PPIAIGSPSASRNNSFRSQVVNGL) are disordered. The span at 267–279 (RNNSFRSQVVNGL) shows a compositional bias: polar residues.

This sequence belongs to the cucumovirus movement protein family.

The protein localises to the host cell junction. The protein resides in the host plasmodesma. Functionally, transports viral genome to neighboring plant cells directly through plasmosdesmata, without any budding. The movement protein allows efficient cell to cell propagation, by bypassing the host cell wall barrier. Acts by forming a tubular structure at the host plasmodesmata, enlarging it enough to allow free passage of virion capsids. This Cucumis sativus (Cucumber) protein is Movement protein.